We begin with the raw amino-acid sequence, 543 residues long: EH domain-containing protein 2 (543 aa).

Residues S3 and S44 each carry the phosphoserine modification. The region spanning 55-286 (FDGKPMVLVA…DLFRDIQGLP (232 aa)) is the Dynamin-type G domain. A G1 motif region spans residues 65 to 72 (GQYSTGKT). 65 to 72 (GQYSTGKT) contributes to the ATP binding site. The G2 motif stretch occupies residues 91-92 (EP). The tract at residues 153-156 (DTPG) is G3 motif. Residues 219 to 222 (NKAD) form a G4 motif region. Position 220 (K220) interacts with ATP. Residue V243 is a region of interest, G5 motif. W258 serves as a coordination point for ATP. Positions 320–340 (SVFGKENKKKQLIFKLPVIFA) are mediates membrane-binding. A phosphoserine mark is found at S438, S468, S470, S484, and S493. The EH domain maps to 449–537 (DKSKYDEIFY…RRLVPPSKRR (89 aa)). An EF-hand domain is found at 481 to 516 (LPNSVLGRIWKLSDVDRDGMLDDEEFALASHLIEAK). D494, D496, D498, M500, and E505 together coordinate Ca(2+). The tract at residues 521-543 (GLPTNLPRRLVPPSKRRQKGSAE) is disordered. The segment covering 534–543 (SKRRQKGSAE) has biased composition (basic residues).

Belongs to the TRAFAC class dynamin-like GTPase superfamily. Dynamin/Fzo/YdjA family. EHD subfamily. Homodimer and homooligomer. Interacts with EHD1. May also interact with EHD3 and EHD4. Interacts with MYOF. Interacts with EHBP1. Interacts with FER1L5 (via second C2 domain). Interacts with CAV1 in a cholesterol-dependent manner. Interacts (via EH domain) with PACSIN2 (via NPF motifs); this interaction probably stabilizes the caveolae.

The protein localises to the cell membrane. It is found in the membrane. The protein resides in the caveola. Its subcellular location is the endosome membrane. It localises to the cytoplasm. The protein localises to the cytosol. The very low intrinsic ATPase activity is increased upon interaction with liposomes. ATP- and membrane-binding protein that controls membrane reorganization/tubulation upon ATP hydrolysis. Plays a role in membrane trafficking between the plasma membrane and endosomes. Important for the internalization of GLUT4. Required for fusion of myoblasts to skeletal muscle myotubes. Required for normal translocation of FER1L5 to the plasma membrane. Regulates the equilibrium between cell surface-associated and cell surface-dissociated caveolae by constraining caveolae at the cell membrane. This Rattus norvegicus (Rat) protein is EH domain-containing protein 2.